We begin with the raw amino-acid sequence, 530 residues long: Ubiquitin carboxyl-terminal hydrolase 17-like protein 11 (530 aa).

Positions 80 to 375 (AGLQNMGNTC…QAYVLFYIQK (296 aa)) constitute a USP domain. The Nucleophile role is filled by C89. Residue H334 is the Proton acceptor of the active site. Basic and acidic residues-rich tracts occupy residues 382 to 392 (SESVSRGREPR) and 398 to 413 (DTDR…RDHP). Disordered stretches follow at residues 382 to 413 (SESV…RDHP) and 509 to 530 (RGRA…LVCQ). A compositionally biased stretch (basic residues) spans 510–524 (GRARRSKGKNKHSKR).

It belongs to the peptidase C19 family. USP17 subfamily.

Its subcellular location is the nucleus. The protein resides in the endoplasmic reticulum. It catalyses the reaction Thiol-dependent hydrolysis of ester, thioester, amide, peptide and isopeptide bonds formed by the C-terminal Gly of ubiquitin (a 76-residue protein attached to proteins as an intracellular targeting signal).. Its function is as follows. Deubiquitinating enzyme that removes conjugated ubiquitin from specific proteins to regulate different cellular processes that may include cell proliferation, progression through the cell cycle, apoptosis, cell migration, and the cellular response to viral infection. This Homo sapiens (Human) protein is Ubiquitin carboxyl-terminal hydrolase 17-like protein 11 (USP17L11).